Reading from the N-terminus, the 220-residue chain is Small ribosomal subunit protein uS5 (220 aa).

Residues 1–39 (MAEQPAGQAGTTDNRDARGDREGRRRDSGRGSRERDGEK) form a disordered region. The span at 13 to 39 (DNRDARGDREGRRRDSGRGSRERDGEK) shows a compositional bias: basic and acidic residues. The S5 DRBM domain maps to 42–105 (YLERVVAINR…EEARKSFFRV (64 aa)).

Belongs to the universal ribosomal protein uS5 family. In terms of assembly, part of the 30S ribosomal subunit. Contacts proteins S4 and S8.

With S4 and S12 plays an important role in translational accuracy. Functionally, located at the back of the 30S subunit body where it stabilizes the conformation of the head with respect to the body. This Mycobacterium bovis (strain ATCC BAA-935 / AF2122/97) protein is Small ribosomal subunit protein uS5.